A 114-amino-acid chain; its full sequence is Small ribosomal subunit protein bS6 (114 aa).

The protein belongs to the bacterial ribosomal protein bS6 family.

In terms of biological role, binds together with bS18 to 16S ribosomal RNA. In Protochlamydia amoebophila (strain UWE25), this protein is Small ribosomal subunit protein bS6.